A 190-amino-acid polypeptide reads, in one-letter code: Pyridoxamine 5'-phosphate oxidase C1952.08c homolog (190 aa).

FMN-binding residues include Ser-62 and Lys-69.

Belongs to the pyridoxamine 5'-phosphate oxidase family. Requires FMN as cofactor.

The protein localises to the cytoplasm. It localises to the nucleus. The polypeptide is Pyridoxamine 5'-phosphate oxidase C1952.08c homolog (Schizosaccharomyces pombe (strain 972 / ATCC 24843) (Fission yeast)).